A 200-amino-acid chain; its full sequence is Recombination protein RecR (200 aa).

The segment at 58–73 adopts a C4-type zinc-finger fold; the sequence is CEVCHNLAEEGLCAIC. One can recognise a Toprim domain in the interval 81 to 176; it reads GLICVVEEPV…DISRLAYGMP (96 aa).

It belongs to the RecR family.

Its function is as follows. May play a role in DNA repair. It seems to be involved in an RecBC-independent recombinational process of DNA repair. It may act with RecF and RecO. The chain is Recombination protein RecR from Magnetococcus marinus (strain ATCC BAA-1437 / JCM 17883 / MC-1).